We begin with the raw amino-acid sequence, 138 residues long: Nucleoside diphosphate kinase (138 aa).

Lys-9, Phe-57, Arg-85, Thr-91, Arg-102, and Asn-112 together coordinate ATP. The Pros-phosphohistidine intermediate role is filled by His-115.

This sequence belongs to the NDK family. Homotetramer. It depends on Mg(2+) as a cofactor.

Its subcellular location is the cytoplasm. The enzyme catalyses a 2'-deoxyribonucleoside 5'-diphosphate + ATP = a 2'-deoxyribonucleoside 5'-triphosphate + ADP. It catalyses the reaction a ribonucleoside 5'-diphosphate + ATP = a ribonucleoside 5'-triphosphate + ADP. Its function is as follows. Major role in the synthesis of nucleoside triphosphates other than ATP. The ATP gamma phosphate is transferred to the NDP beta phosphate via a ping-pong mechanism, using a phosphorylated active-site intermediate. In Lawsonia intracellularis (strain PHE/MN1-00), this protein is Nucleoside diphosphate kinase.